The primary structure comprises 267 residues: Cilia- and flagella-associated protein 300 (267 aa).

Belongs to the CFAP300 family.

Its subcellular location is the cytoplasm. The protein resides in the cytoskeleton. The protein localises to the cilium axoneme. Functionally, cilium- and flagellum-specific protein that plays a role in axonemal structure organization and motility. May play a role in outer and inner dynein arm assembly. The chain is Cilia- and flagella-associated protein 300 from Xenopus tropicalis (Western clawed frog).